The following is a 685-amino-acid chain: Putative protein FAR1-RELATED SEQUENCE 10 (685 aa).

In terms of domain architecture, FAR1 spans 69 to 161; the sequence is EYYSTFARKS…SNVHNHELLE (93 aa). An MULE domain is found at 292–388; the sequence is VVVFDTSYRS…FMSHIVSKLA (97 aa). The SWIM-type zinc-finger motif lies at 565 to 603; it reads GECCVIWNPENEEIQCSCKEFEHSGILCRHTLRVLTVKN.

The protein belongs to the FHY3/FAR1 family.

This Arabidopsis thaliana (Mouse-ear cress) protein is Putative protein FAR1-RELATED SEQUENCE 10 (FRS10).